The following is a 124-amino-acid chain: Ribonuclease pancreatic (124 aa).

The span at 1-13 (KETAAEKFQRQHM) shows a compositional bias: basic and acidic residues. Residues 1–21 (KETAAEKFQRQHMDTSSSLSN) are disordered. Residues K7 and R10 each contribute to the substrate site. Catalysis depends on H12, which acts as the Proton acceptor. 4 cysteine pairs are disulfide-bonded: C26–C84, C40–C95, C58–C110, and C65–C72. N-linked (GlcNAc...) asparagine glycosylation is present at N34. Residues 41-45 (KPVNT), K66, and R85 each bind substrate. H119 acts as the Proton donor in catalysis.

The protein belongs to the pancreatic ribonuclease family. In terms of assembly, monomer. Interacts with and forms tight 1:1 complexes with RNH1. Dimerization of two such complexes may occur. Interaction with RNH1 inhibits this protein. Pancreas.

The protein resides in the secreted. It carries out the reaction an [RNA] containing cytidine + H2O = an [RNA]-3'-cytidine-3'-phosphate + a 5'-hydroxy-ribonucleotide-3'-[RNA].. The catalysed reaction is an [RNA] containing uridine + H2O = an [RNA]-3'-uridine-3'-phosphate + a 5'-hydroxy-ribonucleotide-3'-[RNA].. Endonuclease that catalyzes the cleavage of RNA on the 3' side of pyrimidine nucleotides. Acts on single-stranded and double-stranded RNA. The sequence is that of Ribonuclease pancreatic (RNASE1) from Hippopotamus amphibius (Hippopotamus).